The following is an 848-amino-acid chain: Beta-galactosidase 13 (848 aa).

The first 27 residues, 1 to 27 (MKIHSSDHSWLLLAVLVILLSFSGALS), serve as a signal peptide directing secretion. Residue asparagine 107 is glycosylated (N-linked (GlcNAc...) asparagine). Catalysis depends on glutamate 200, which acts as the Proton donor. The active-site Nucleophile is the glutamate 271. N-linked (GlcNAc...) asparagine glycosylation is found at asparagine 272, asparagine 303, asparagine 376, asparagine 398, asparagine 782, asparagine 787, and asparagine 817. The 90-residue stretch at 754–843 (DDVHLTANLK…KKLAVQVKCG (90 aa)) folds into the SUEL-type lectin domain.

It belongs to the glycosyl hydrolase 35 family. In terms of tissue distribution, ubiquitous, with higher expression levels in roots, flowers and siliques.

It localises to the secreted. It is found in the extracellular space. The protein resides in the apoplast. The catalysed reaction is Hydrolysis of terminal non-reducing beta-D-galactose residues in beta-D-galactosides.. In Arabidopsis thaliana (Mouse-ear cress), this protein is Beta-galactosidase 13 (BGAL13).